The primary structure comprises 67 residues: Transcription elongation factor Spt4 (67 aa).

The Zn(2+) site is built by cysteine 7, cysteine 10, cysteine 19, and cysteine 22.

Belongs to the archaeal Spt4 family. In terms of assembly, heterodimer composed of Spt4 and Spt5. Interacts with RNA polymerase (RNAP). The complex interacts with FttA.

The protein resides in the chromosome. Functionally, the Stp4-Spt5 complex stimulates transcription elongation on both naked DNA and histone-bound DNA (chromatin), facilitating transcription through the histone barrier. Neither protein functions alone. The complex also stimulates the transcription termination activity of FttA, neither protein alone stimulates FttA-dependent termination. This is Transcription elongation factor Spt4 from Thermococcus kodakarensis (strain ATCC BAA-918 / JCM 12380 / KOD1) (Pyrococcus kodakaraensis (strain KOD1)).